The primary structure comprises 395 residues: LL-diaminopimelate aminotransferase (395 aa).

Residues tyrosine 14 and glycine 41 each coordinate substrate. Pyridoxal 5'-phosphate contacts are provided by residues tyrosine 71, 104 to 105 (AK), tyrosine 128, asparagine 174, tyrosine 205, and 233 to 235 (SFS). Positions 105, 128, and 174 each coordinate substrate. N6-(pyridoxal phosphate)lysine is present on lysine 236. Residues arginine 244 and asparagine 275 each contribute to the pyridoxal 5'-phosphate site. Positions 275 and 368 each coordinate substrate.

Belongs to the class-I pyridoxal-phosphate-dependent aminotransferase family. LL-diaminopimelate aminotransferase subfamily. In terms of assembly, homodimer. Pyridoxal 5'-phosphate is required as a cofactor.

It carries out the reaction (2S,6S)-2,6-diaminopimelate + 2-oxoglutarate = (S)-2,3,4,5-tetrahydrodipicolinate + L-glutamate + H2O + H(+). It participates in amino-acid biosynthesis; L-lysine biosynthesis via DAP pathway; LL-2,6-diaminopimelate from (S)-tetrahydrodipicolinate (aminotransferase route): step 1/1. Involved in the synthesis of meso-diaminopimelate (m-DAP or DL-DAP), required for both lysine and peptidoglycan biosynthesis. Catalyzes the direct conversion of tetrahydrodipicolinate to LL-diaminopimelate. The chain is LL-diaminopimelate aminotransferase from Chlamydia caviae (strain ATCC VR-813 / DSM 19441 / 03DC25 / GPIC) (Chlamydophila caviae).